Reading from the N-terminus, the 428-residue chain is MDEFKPEDELKPDPSDRRTGRSRQSSERSERTERGEPQINFDDIELDDTDDRRPTRAQKERNEEPEIEEEIDESEDETVDEERVERRPRKRKKAASKPASRQYMMMGVGILVLLLLIIGIGSALKAPSTTSSDQTASGEKSIDLAGNATDQANGVQPAPGTTSAENTQQDVSLPPISSTPTQGQTPVATDGQQRVEVQGDLNNALTQPQNQQQLNNVAVNSTLPTEPATVAPVRNGNASRDTAKTQTAERPSTTRPARQQAVIEPKKPQATVKTEPKPVAQTPKRTEPAAPVASTKAPAATSTPAPKETATTAPVQTASPAQTTATPAAGAKTAGNVGSLKSAPSSHYTLQLSSSSNYDNLNGWAKKENLKNYVVYETTRNGQPWYVLVSGVYASKEEAKKAVSTLPADVQAKNPWAKPLRQVQADLK.

The segment at 1–99 (MDEFKPEDEL…KRKKAASKPA (99 aa)) is disordered. The Cytoplasmic portion of the chain corresponds to 1–103 (MDEFKPEDEL…AASKPASRQY (103 aa)). Basic and acidic residues-rich tracts occupy residues 7 to 36 (EDEL…ERGE) and 50 to 64 (DDRR…RNEE). Residues 55-87 (TRAQKERNEEPEIEEEIDESEDETVDEERVERR) adopt a coiled-coil conformation. Residues 65–82 (PEIEEEIDESEDETVDEE) show a composition bias toward acidic residues. Over residues 86 to 95 (RRPRKRKKAA) the composition is skewed to basic residues. A helical transmembrane segment spans residues 104-124 (MMMGVGILVLLLLIIGIGSAL). The Periplasmic segment spans residues 125–428 (KAPSTTSSDQ…PLRQVQADLK (304 aa)). 2 disordered regions span residues 149-190 (TDQA…VATD) and 226-344 (EPAT…KSAP). Residues 236 to 257 (GNASRDTAKTQTAERPSTTRPA) show a composition bias toward polar residues. Residues 288-334 (PAAPVASTKAPAATSTPAPKETATTAPVQTASPAQTTATPAAGAKTA) show a composition bias toward low complexity. One can recognise an SPOR domain in the interval 342–419 (SAPSSHYTLQ…VQAKNPWAKP (78 aa)).

It belongs to the DamX family. In terms of assembly, interacts in vitro with multiple Fts proteins, including FtsQ and FtsN.

It is found in the cell inner membrane. In terms of biological role, non-essential cell division protein. The sequence is that of Cell division protein DamX from Escherichia coli (strain K12).